The chain runs to 174 residues: Xanthine-guanine phosphoribosyltransferase (174 aa).

5-phospho-alpha-D-ribose 1-diphosphate contacts are provided by residues 49 to 50 (RG) and 108 to 116 (DDLVDTGAT). Residue Asp109 participates in Mg(2+) binding. Guanine is bound by residues Asp112 and Ile155. 2 residues coordinate xanthine: Asp112 and Ile155. Residues 112 to 116 (DTGAT) and 154 to 155 (WI) each bind GMP.

The protein belongs to the purine/pyrimidine phosphoribosyltransferase family. XGPT subfamily. Homotetramer. Mg(2+) is required as a cofactor.

Its subcellular location is the cell inner membrane. The enzyme catalyses GMP + diphosphate = guanine + 5-phospho-alpha-D-ribose 1-diphosphate. It carries out the reaction XMP + diphosphate = xanthine + 5-phospho-alpha-D-ribose 1-diphosphate. It catalyses the reaction IMP + diphosphate = hypoxanthine + 5-phospho-alpha-D-ribose 1-diphosphate. It functions in the pathway purine metabolism; GMP biosynthesis via salvage pathway; GMP from guanine: step 1/1. Its pathway is purine metabolism; XMP biosynthesis via salvage pathway; XMP from xanthine: step 1/1. Functionally, purine salvage pathway enzyme that catalyzes the transfer of the ribosyl-5-phosphate group from 5-phospho-alpha-D-ribose 1-diphosphate (PRPP) to the N9 position of the 6-oxopurines guanine and xanthine to form the corresponding ribonucleotides GMP (guanosine 5'-monophosphate) and XMP (xanthosine 5'-monophosphate), with the release of PPi. To a lesser extent, also acts on hypoxanthine. This chain is Xanthine-guanine phosphoribosyltransferase, found in Rhodopseudomonas palustris (strain BisB18).